A 606-amino-acid polypeptide reads, in one-letter code: Glutamine--fructose-6-phosphate aminotransferase [isomerizing] (606 aa).

The Nucleophile; for GATase activity role is filled by cysteine 2. The 216-residue stretch at 2–217 folds into the Glutamine amidotransferase type-2 domain; it reads CGIIGIVGKE…EGDYVALDHD (216 aa). 2 SIS domains span residues 280 to 421 and 454 to 596; these read VPGD…ARGT and IAAD…VDQP. Lysine 601 serves as the catalytic For Fru-6P isomerization activity.

In terms of assembly, homodimer.

It localises to the cytoplasm. It catalyses the reaction D-fructose 6-phosphate + L-glutamine = D-glucosamine 6-phosphate + L-glutamate. Catalyzes the first step in hexosamine metabolism, converting fructose-6P into glucosamine-6P using glutamine as a nitrogen source. This chain is Glutamine--fructose-6-phosphate aminotransferase [isomerizing], found in Caulobacter vibrioides (strain ATCC 19089 / CIP 103742 / CB 15) (Caulobacter crescentus).